A 190-amino-acid polypeptide reads, in one-letter code: MAAIKPITTYKGKIVPLFNDNIDTDQIIPKVHLKRISKSGFGPFAFDEWRYLPDGSDNPDFNPNKPQYKGASILITGDNFGCGSSREHAAWALKDYGFHIIIAGSFSDIFYMNCTKNAMLPIVLEKSAREHLAQYEEIEIDLPNQTVSSPDKRFHFEIDETWKNKLVNGLDDIAITLQYESLIEKYEKSL.

It belongs to the LeuD family. LeuD type 1 subfamily. Heterodimer of LeuC and LeuD.

It carries out the reaction (2R,3S)-3-isopropylmalate = (2S)-2-isopropylmalate. It functions in the pathway amino-acid biosynthesis; L-leucine biosynthesis; L-leucine from 3-methyl-2-oxobutanoate: step 2/4. In terms of biological role, catalyzes the isomerization between 2-isopropylmalate and 3-isopropylmalate, via the formation of 2-isopropylmaleate. This is 3-isopropylmalate dehydratase small subunit from Staphylococcus aureus (strain JH1).